The chain runs to 73 residues: Translation initiation factor IF-1 (73 aa).

The 73-residue stretch at 1 to 73 (MAKKDGVIEL…ARGRIVYRYK (73 aa)) folds into the S1-like domain.

The protein belongs to the IF-1 family. As to quaternary structure, component of the 30S ribosomal translation pre-initiation complex which assembles on the 30S ribosome in the order IF-2 and IF-3, IF-1 and N-formylmethionyl-tRNA(fMet); mRNA recruitment can occur at any time during PIC assembly.

Its subcellular location is the cytoplasm. Its function is as follows. One of the essential components for the initiation of protein synthesis. Stabilizes the binding of IF-2 and IF-3 on the 30S subunit to which N-formylmethionyl-tRNA(fMet) subsequently binds. Helps modulate mRNA selection, yielding the 30S pre-initiation complex (PIC). Upon addition of the 50S ribosomal subunit IF-1, IF-2 and IF-3 are released leaving the mature 70S translation initiation complex. The chain is Translation initiation factor IF-1 from Tropheryma whipplei (strain TW08/27) (Whipple's bacillus).